The sequence spans 485 residues: WAS/WASL-interacting protein family member 3 (485 aa).

Residues 1–30 show a composition bias toward pro residues; sequence MPVPPPPPPPLPPPPPPLGAPPPPPPPGPP. Positions 1 to 485 are disordered; it reads MPVPPPPPPP…NSQLSLKALR (485 aa). Short sequence motifs (profilin-binding motif) lie at residues 3-8, 11-16, and 20-25; these read VPPPPP, LPPPPP, and APPPPP. The WH2 domain occupies 45-62; sequence GRSALLADIQQGTRLRKV. Arg46 carries the asymmetric dimethylarginine modification. Residues 58 to 61 carry the RLRK motif; that stretch reads RLRK. The span at 63 to 78 shows a compositional bias: polar residues; the sequence is TQINDRSAPQIESSKG. Ser150 is modified (phosphoserine). 2 stretches are compositionally biased toward pro residues: residues 165 to 200 and 207 to 243; these read PVPP…PPAS and VSPP…PLPP. Ser208 carries the phosphoserine modification. Positions 244-259 are enriched in low complexity; the sequence is ASALSEKAVRPQLAPL. Composition is skewed to pro residues over residues 260–275 and 293–312; these read HLPP…PPYG and PPAP…PPLP. Phosphoserine is present on Ser394. The segment covering 396 to 407 has biased composition (polar residues); that stretch reads TTELSSKTQQPG. Residues 417 to 441 show a composition bias toward basic and acidic residues; the sequence is VIDDFESKFTFHSMEDFPPPDEYKP. Positions 426–450 match the WASP-binding motif motif; it reads TFHSMEDFPPPDEYKPGQKIYPSKV. Residues 475-485 are compositionally biased toward polar residues; that stretch reads RNSQLSLKALR.

It belongs to the verprolin family. Isoform 1 interacts with WASL (via WH1 domain), and monomeric and filamentous actin. As to expression, detected mainly in brain and at lower levels in heart and lung (at protein level). Also detected in testis but not in kidney, liver or spleen.

The protein resides in the cytoplasm. May have a role in spermatogenesis. May be a regulator of cytoskeletal organization. This chain is WAS/WASL-interacting protein family member 3 (Wipf3), found in Rattus norvegicus (Rat).